The primary structure comprises 215 residues: Large ribosomal subunit protein uL4 (215 aa).

The tract at residues 43-100 is disordered; it reads AAKRQGTHSTKTRGEVSGGGKKPYRQKGSGRARQGSTRAPQFTGGGTVHGPKPRDYSQ.

This sequence belongs to the universal ribosomal protein uL4 family. Part of the 50S ribosomal subunit.

In terms of biological role, one of the primary rRNA binding proteins, this protein initially binds near the 5'-end of the 23S rRNA. It is important during the early stages of 50S assembly. It makes multiple contacts with different domains of the 23S rRNA in the assembled 50S subunit and ribosome. Functionally, forms part of the polypeptide exit tunnel. This Mycolicibacterium smegmatis (Mycobacterium smegmatis) protein is Large ribosomal subunit protein uL4.